A 922-amino-acid polypeptide reads, in one-letter code: DNA gyrase subunit A (922 aa).

The 501-residue stretch at 34 to 534 (LPDVRDGLKP…SSAEINIEDL (501 aa)) folds into the Topo IIA-type catalytic domain. The active-site O-(5'-phospho-DNA)-tyrosine intermediate is the Tyr122. The GyrA-box motif lies at 561 to 567 (QRRGGRG). Disordered stretches follow at residues 715 to 763 (MQPM…VRPM) and 899 to 922 (IDGE…DPEE). The segment covering 723–743 (DDVDGDDESVIDAGNDDDGSD) has biased composition (acidic residues).

The protein belongs to the type II topoisomerase GyrA/ParC subunit family. Heterotetramer, composed of two GyrA and two GyrB chains. In the heterotetramer, GyrA contains the active site tyrosine that forms a transient covalent intermediate with DNA, while GyrB binds cofactors and catalyzes ATP hydrolysis.

The protein resides in the cytoplasm. It catalyses the reaction ATP-dependent breakage, passage and rejoining of double-stranded DNA.. A type II topoisomerase that negatively supercoils closed circular double-stranded (ds) DNA in an ATP-dependent manner to modulate DNA topology and maintain chromosomes in an underwound state. Negative supercoiling favors strand separation, and DNA replication, transcription, recombination and repair, all of which involve strand separation. Also able to catalyze the interconversion of other topological isomers of dsDNA rings, including catenanes and knotted rings. Type II topoisomerases break and join 2 DNA strands simultaneously in an ATP-dependent manner. This chain is DNA gyrase subunit A, found in Aeromonas salmonicida.